We begin with the raw amino-acid sequence, 259 residues long: Ribosomal RNA small subunit methyltransferase A (259 aa).

The S-adenosyl-L-methionine site is built by Asn13, Leu15, Gly40, Glu61, Asp85, and Asn103.

It belongs to the class I-like SAM-binding methyltransferase superfamily. rRNA adenine N(6)-methyltransferase family. RsmA subfamily.

Its subcellular location is the cytoplasm. It carries out the reaction adenosine(1518)/adenosine(1519) in 16S rRNA + 4 S-adenosyl-L-methionine = N(6)-dimethyladenosine(1518)/N(6)-dimethyladenosine(1519) in 16S rRNA + 4 S-adenosyl-L-homocysteine + 4 H(+). Functionally, specifically dimethylates two adjacent adenosines (A1518 and A1519) in the loop of a conserved hairpin near the 3'-end of 16S rRNA in the 30S particle. May play a critical role in biogenesis of 30S subunits. This is Ribosomal RNA small subunit methyltransferase A from Neisseria meningitidis serogroup B (strain ATCC BAA-335 / MC58).